The sequence spans 464 residues: Fumarate hydratase class II (464 aa).

Residues 98–100 (SGT), 129–132 (HPND), 139–141 (SSN), and Thr187 each bind substrate. Residue His188 is the Proton donor/acceptor of the active site. The active site involves Ser318. Substrate contacts are provided by residues Ser319 and 324–326 (KVN).

Belongs to the class-II fumarase/aspartase family. Fumarase subfamily. Homotetramer.

It is found in the cytoplasm. The enzyme catalyses (S)-malate = fumarate + H2O. It participates in carbohydrate metabolism; tricarboxylic acid cycle; (S)-malate from fumarate: step 1/1. Its function is as follows. Involved in the TCA cycle. Catalyzes the stereospecific interconversion of fumarate to L-malate. This Haemophilus ducreyi (strain 35000HP / ATCC 700724) protein is Fumarate hydratase class II.